The following is a 207-amino-acid chain: Cytochrome c biogenesis ATP-binding export protein CcmA (207 aa).

An ABC transporter domain is found at 3-206 (LMAEGLSARR…AKSLEMTGFV (204 aa)). 35 to 42 (GPNGAGKS) contributes to the ATP binding site.

Belongs to the ABC transporter superfamily. CcmA exporter (TC 3.A.1.107) family. The complex is composed of two ATP-binding proteins (CcmA) and two transmembrane proteins (CcmB).

The protein resides in the cell inner membrane. The enzyme catalyses heme b(in) + ATP + H2O = heme b(out) + ADP + phosphate + H(+). Its function is as follows. Part of the ABC transporter complex CcmAB involved in the biogenesis of c-type cytochromes; once thought to export heme, this seems not to be the case, but its exact role is uncertain. Responsible for energy coupling to the transport system. The chain is Cytochrome c biogenesis ATP-binding export protein CcmA from Rhizobium meliloti (strain 1021) (Ensifer meliloti).